Reading from the N-terminus, the 290-residue chain is 4-hydroxybenzoate octaprenyltransferase (290 aa).

A run of 8 helical transmembrane segments spans residues 40–60 (IAGAGTPSLTVIVVFFLGVVI), 99–119 (LALFGGLGLLAFGLVLFLNEL), 120–140 (TFWLSFGGLGLAVLYPFTKRF), 142–162 (FMPQLFLGAAFSWAIPMAFAA), 165–185 (GEVPEIAWLLYVANVLWTVAY), 215–235 (LMIAILQALTLLALIMVGHRL), 239–259 (WPWYAGLVGMSLSFAFQHSLI), and 267–287 (SFHAFLNNHWAGACVFIGLYF).

The protein belongs to the UbiA prenyltransferase family. Mg(2+) is required as a cofactor.

The protein resides in the cell inner membrane. The catalysed reaction is all-trans-octaprenyl diphosphate + 4-hydroxybenzoate = 4-hydroxy-3-(all-trans-octaprenyl)benzoate + diphosphate. The protein operates within cofactor biosynthesis; ubiquinone biosynthesis. In terms of biological role, catalyzes the prenylation of para-hydroxybenzoate (PHB) with an all-trans polyprenyl group. Mediates the second step in the final reaction sequence of ubiquinone-8 (UQ-8) biosynthesis, which is the condensation of the polyisoprenoid side chain with PHB, generating the first membrane-bound Q intermediate 3-octaprenyl-4-hydroxybenzoate. This Alcanivorax borkumensis (strain ATCC 700651 / DSM 11573 / NCIMB 13689 / SK2) protein is 4-hydroxybenzoate octaprenyltransferase.